Consider the following 481-residue polypeptide: Glutamate--tRNA ligase (481 aa).

Residues 11–21 (PSPTGLLHIGN) carry the 'HIGH' region motif. Residues 255–259 (KLSKR) carry the 'KMSKS' region motif. K258 contributes to the ATP binding site.

This sequence belongs to the class-I aminoacyl-tRNA synthetase family. Glutamate--tRNA ligase type 1 subfamily. In terms of assembly, monomer.

The protein localises to the cytoplasm. It carries out the reaction tRNA(Glu) + L-glutamate + ATP = L-glutamyl-tRNA(Glu) + AMP + diphosphate. Catalyzes the attachment of glutamate to tRNA(Glu) in a two-step reaction: glutamate is first activated by ATP to form Glu-AMP and then transferred to the acceptor end of tRNA(Glu). This is Glutamate--tRNA ligase from Streptococcus pyogenes serotype M4 (strain MGAS10750).